A 933-amino-acid polypeptide reads, in one-letter code: Myocardin (933 aa).

An MEF2C-binding motif is present at residues 12-27; that stretch reads IRSKFRSVLQLRLQQR. RPEL repeat units follow at residues 18–43, 62–87, and 106–131; these read SVLQ…PPLR, DTLK…QASS, and DDLN…PVDC. Residues 153–205 form an HDAC5-binding region; that stretch reads FEEDSSSDGLSPDQTRSEDLPGSAGSPLDTKAAETPLAGPRGTVQDLTLGSEN. 2 disordered regions span residues 154-282 and 324-365; these read EEDS…PPPM and NEQM…GPLP. Positions 210-220 are enriched in polar residues; sequence SAPQSGNQSDL. Residues 248 to 265 are compositionally biased toward basic residues; that stretch reads NRHKKPKDPKPKVKKLKY. Positions 330–346 are enriched in low complexity; it reads NPNSSSAPLSSTPLSPA. Residues 347–357 are compositionally biased toward polar residues; the sequence is KNSFSGQTGVS. The SAP domain maps to 368 to 402; the sequence is LDDLKVSELRQQLRIRGLPVSGTKTALMDRLRPFQ. 4 positions are modified to phosphoserine; by GSK3-beta: Ser445, Ser449, Ser453, and Ser457. Positions 515 to 550 form a coiled coil; sequence LVEKQKVINELTWKLQQEQRQVEELRMQLQKQKRGT. The interval 568–613 is disordered; it reads DAGSSCPFAPLPRAVKRQSNSSEEQPAAGDAARLRPLGNTHCAESS. Residues Ser621, Ser625, Ser629, and Ser633 each carry the phosphoserine; by GSK3-beta modification. 2 disordered regions span residues 630-672 and 760-794; these read PQHS…VSSP and PKIP…FDHY. The interval 712–933 is required for interaction with and ubiquitination by STUB1; that stretch reads ITQPPSYEDA…SPMDLHLQQW (222 aa). Residues Ser810, Ser857, and Ser864 each carry the phosphoserine; by MAPK1 and MAPK3 modification. Thr891 bears the Phosphothreonine; by MAPK1 and MAPK3 mark.

As to quaternary structure, homodimer. Interacts with MLLT7/FOXO4. Interacts with SRF, its association does not depend on specific DNA sequences for ternary complex formation. Interacts (via C-terminal) with EP300 (via the CREB-binding domain). Interacts with HDAC4 and HDAC5. Interacts with MEF2C. Interacts (via C-terminus) with STUB1/CHIP. Interacts with PURB. Post-translationally, ubiquitinated; by STUB1/CHIP at the C-terminus, leading to its degradation by the proteasome. Phosphorylation by GSK3B is required for STUB1/CHIP-mediated ubiquitination. Phosphorylation negatively regulates the intrinsic myocardin transcriptional activity. Phosphorylated; by GSK3B. In terms of tissue distribution, expressed in the heart and in smooth muscle cells-containing tissues (aorta, pulmonary vein, lung), but is not detectable in skeletal muscle, liver, kidney and spleen.

Its subcellular location is the nucleus. Smooth muscle cells (SM) and cardiac muscle cells-specific transcriptional factor which uses the canonical single or multiple CArG boxes DNA sequence. Acts as a cofactor of serum response factor (SRF) with the potential to modulate SRF-target genes. Plays a crucial role in cardiogenesis, urinary bladder development, and differentiation of the smooth muscle cell lineage (myogenesis). Positively regulates the transcription of genes involved in vascular smooth muscle contraction. This is Myocardin (MYOCD) from Sus scrofa (Pig).